The chain runs to 194 residues: Chromophore lyase CpcT/CpeT 1 (194 aa).

It belongs to the CpcT/CpeT biliprotein lyase family.

Covalently attaches a chromophore to Cys residue(s) of phycobiliproteins. This Microcystis aeruginosa (strain NIES-843 / IAM M-2473) protein is Chromophore lyase CpcT/CpeT 1.